We begin with the raw amino-acid sequence, 349 residues long: Anthranilate phosphoribosyltransferase (349 aa).

5-phospho-alpha-D-ribose 1-diphosphate contacts are provided by residues Gly-82, 85–86, 92–95, 110–118, and Ser-122; these read GD, NVST, and KHGNRAVSG. Residue Gly-82 participates in anthranilate binding. Residue Ser-94 participates in Mg(2+) binding. Asn-113 contacts anthranilate. Arg-168 is a binding site for anthranilate. Mg(2+) is bound by residues Asp-227 and Glu-228.

This sequence belongs to the anthranilate phosphoribosyltransferase family. In terms of assembly, homodimer. Mg(2+) serves as cofactor.

It carries out the reaction N-(5-phospho-beta-D-ribosyl)anthranilate + diphosphate = 5-phospho-alpha-D-ribose 1-diphosphate + anthranilate. It participates in amino-acid biosynthesis; L-tryptophan biosynthesis; L-tryptophan from chorismate: step 2/5. Its function is as follows. Catalyzes the transfer of the phosphoribosyl group of 5-phosphorylribose-1-pyrophosphate (PRPP) to anthranilate to yield N-(5'-phosphoribosyl)-anthranilate (PRA). The chain is Anthranilate phosphoribosyltransferase from Pseudomonas fluorescens (strain SBW25).